A 114-amino-acid polypeptide reads, in one-letter code: Probable 4-amino-4-deoxy-L-arabinose-phosphoundecaprenol flippase subunit ArnE (114 aa).

2 helical membrane-spanning segments follow: residues 41–61 and 68–88; these read GWLW…LLVL and VAYP…HFVF. An EamA domain is found at 43 to 112; it reads LWLALFSLGL…VIGGVLLLSR (70 aa).

It belongs to the ArnE family. In terms of assembly, heterodimer of ArnE and ArnF.

The protein localises to the cell inner membrane. It participates in bacterial outer membrane biogenesis; lipopolysaccharide biosynthesis. Translocates 4-amino-4-deoxy-L-arabinose-phosphoundecaprenol (alpha-L-Ara4N-phosphoundecaprenol) from the cytoplasmic to the periplasmic side of the inner membrane. This is Probable 4-amino-4-deoxy-L-arabinose-phosphoundecaprenol flippase subunit ArnE from Pseudomonas fluorescens (strain ATCC BAA-477 / NRRL B-23932 / Pf-5).